Here is a 131-residue protein sequence, read N- to C-terminus: Profilin (131 aa).

The protein belongs to the profilin family. In terms of assembly, occurs in many kinds of cells as a complex with monomeric actin in a 1:1 ratio.

The protein localises to the cytoplasm. It localises to the cytoskeleton. Functionally, binds to actin and affects the structure of the cytoskeleton. At high concentrations, profilin prevents the polymerization of actin, whereas it enhances it at low concentrations. By binding to PIP2, it inhibits the formation of IP3 and DG. The polypeptide is Profilin (Cucumis melo (Muskmelon)).